The chain runs to 377 residues: MTTQFSVAGIELELFRYPASQESNLQAWDAADEHLINTLVEGGQTAVPTAIINDNFGALSCALSRLTPDWPLNVETDARTSFLGAEQNHLRNQLPMDNLTWFTSRDALPGDLALVLMKLPKNLTYFAHQLMRLSQVLPAGCKVLVGAKAKSINASLLEVFAKYLGPASASLAWKKTRVITCISDGKPRALPKEITWDIPEFNLHISNLSNVFAANKLDIGARIMLDNLPQGDFKTIVDLGCGNGVLGLRAAQLYPNANIHFIDDSEMAVASAKANWANNQLPAEKGHFHWDDCMTHLPDGVEPDLVLCNPPFHQGEAITDHIAWQMFLDARRRLKNGGILHIVGNRHLAYHVKLQRLFKNCTTVASNGKFVILQAQR.

The protein belongs to the methyltransferase superfamily. RlmG family.

Its subcellular location is the cytoplasm. The enzyme catalyses guanosine(1835) in 23S rRNA + S-adenosyl-L-methionine = N(2)-methylguanosine(1835) in 23S rRNA + S-adenosyl-L-homocysteine + H(+). Its function is as follows. Specifically methylates the guanine in position 1835 (m2G1835) of 23S rRNA. This is Ribosomal RNA large subunit methyltransferase G from Shewanella sp. (strain MR-4).